Consider the following 597-residue polypeptide: Apurinic-apyrimidinic endonuclease 1 (597 aa).

The span at 232-246 (YNNDTKYLSNPKGVT) shows a compositional bias: polar residues. Residues 232–296 (YNNDTKYLSN…IPPIPKNTED (65 aa)) form a disordered region. Positions 265 to 274 (NNNNNNNNNK) are enriched in low complexity. Histidine 380, histidine 420, glutamate 456, aspartate 490, histidine 493, histidine 527, aspartate 540, histidine 542, and glutamate 572 together coordinate Zn(2+). Histidine 493 serves as a coordination point for Mn(2+). 2 residues coordinate Mn(2+): aspartate 540 and histidine 542.

It belongs to the AP endonuclease 2 family. Zn(2+) serves as cofactor. The cofactor is Mn(2+). In terms of processing, may be proteolytically cleaved into a 59 kDa form.

It localises to the mitochondrion. With respect to regulation, apurinic/apyrimidinic (AP) endonuclease activity is enhanced with increasing concentrations of Mn(2+), while Zn(2+) initially enhances activity but subsequently inhibits activity in a concentration-dependent manner. Co(2+) inhibits apurinic/apyrimidinic (AP) endonuclease activity at concentrations greater than 2.5 mM. Functionally, plays a role in mitochondrial DNA base excision repair (BER) pathway induced by oxidative stress. Has apurinic/apyrimidinic (AP) endonuclease activity towards double-stranded DNA (dsDNA) with a preference for C as opposite base. Has 3'-phosphatase activity; removes 3'-phosphate from blunt-end, recessed, and gapped DNA templates and thus, removes 3'-blocks for DNA polymerase activity during BER. Lacks 3'-5' exonuclease activity and does not cleave damaged bases by nucleotide incision repair (NIR). The sequence is that of Apurinic-apyrimidinic endonuclease 1 from Plasmodium falciparum (isolate 3D7).